A 614-amino-acid chain; its full sequence is Phosphomethylpyrimidine synthase (614 aa).

Residues N226, M255, Y284, H320, 340-342 (SRG), 381-384 (DGLR), and E420 contribute to the substrate site. Zn(2+) is bound at residue H424. Y447 provides a ligand contact to substrate. H488 is a binding site for Zn(2+). [4Fe-4S] cluster is bound by residues C568, C571, and C576.

Belongs to the ThiC family. In terms of assembly, homodimer. [4Fe-4S] cluster is required as a cofactor.

It catalyses the reaction 5-amino-1-(5-phospho-beta-D-ribosyl)imidazole + S-adenosyl-L-methionine = 4-amino-2-methyl-5-(phosphooxymethyl)pyrimidine + CO + 5'-deoxyadenosine + formate + L-methionine + 3 H(+). Its pathway is cofactor biosynthesis; thiamine diphosphate biosynthesis. Functionally, catalyzes the synthesis of the hydroxymethylpyrimidine phosphate (HMP-P) moiety of thiamine from aminoimidazole ribotide (AIR) in a radical S-adenosyl-L-methionine (SAM)-dependent reaction. This chain is Phosphomethylpyrimidine synthase, found in Acidovorax sp. (strain JS42).